The chain runs to 563 residues: Dihydroxy-acid dehydratase (563 aa).

Asp-79 contacts Mg(2+). Cys-120 contacts [2Fe-2S] cluster. Positions 121 and 122 each coordinate Mg(2+). N6-carboxylysine is present on Lys-122. Cys-193 serves as a coordination point for [2Fe-2S] cluster. Glu-451 is a Mg(2+) binding site. Catalysis depends on Ser-477, which acts as the Proton acceptor.

The protein belongs to the IlvD/Edd family. In terms of assembly, homodimer. The cofactor is [2Fe-2S] cluster. Mg(2+) is required as a cofactor.

It catalyses the reaction (2R)-2,3-dihydroxy-3-methylbutanoate = 3-methyl-2-oxobutanoate + H2O. The enzyme catalyses (2R,3R)-2,3-dihydroxy-3-methylpentanoate = (S)-3-methyl-2-oxopentanoate + H2O. The protein operates within amino-acid biosynthesis; L-isoleucine biosynthesis; L-isoleucine from 2-oxobutanoate: step 3/4. Its pathway is amino-acid biosynthesis; L-valine biosynthesis; L-valine from pyruvate: step 3/4. Functions in the biosynthesis of branched-chain amino acids. Catalyzes the dehydration of (2R,3R)-2,3-dihydroxy-3-methylpentanoate (2,3-dihydroxy-3-methylvalerate) into 2-oxo-3-methylpentanoate (2-oxo-3-methylvalerate) and of (2R)-2,3-dihydroxy-3-methylbutanoate (2,3-dihydroxyisovalerate) into 2-oxo-3-methylbutanoate (2-oxoisovalerate), the penultimate precursor to L-isoleucine and L-valine, respectively. The protein is Dihydroxy-acid dehydratase of Sulfurovum sp. (strain NBC37-1).